Reading from the N-terminus, the 366-residue chain is Cobalt-precorrin-5B C(1)-methyltransferase (366 aa).

Belongs to the CbiD family.

It carries out the reaction Co-precorrin-5B + S-adenosyl-L-methionine = Co-precorrin-6A + S-adenosyl-L-homocysteine. It participates in cofactor biosynthesis; adenosylcobalamin biosynthesis; cob(II)yrinate a,c-diamide from sirohydrochlorin (anaerobic route): step 6/10. Its function is as follows. Catalyzes the methylation of C-1 in cobalt-precorrin-5B to form cobalt-precorrin-6A. This is Cobalt-precorrin-5B C(1)-methyltransferase from Hahella chejuensis (strain KCTC 2396).